The primary structure comprises 1435 residues: Gag-Pol polyprotein (1435 aa).

Gly2 is lipidated: N-myristoyl glycine; by host. The interaction with Gp41 stretch occupies residues 7–31 (VLSAGELDKWEKIRLRPGGKKQYRL). The segment at 8–43 (LSAGELDKWEKIRLRPGGKKQYRLKHIVWASRELER) is interaction with host CALM1. Residues 12–19 (ELDKWEKI) are interaction with host AP3D1. The tract at residues 14 to 33 (DKWEKIRLRPGGKKQYRLKH) is interaction with membrane phosphatidylinositol 4,5-bisphosphate and RNA. A Nuclear export signal motif is present at residues 16–22 (WEKIRLR). The short motif at 26-32 (KKQYRLK) is the Nuclear localization signal element. The tract at residues 73–77 (EELRS) is interaction with membrane phosphatidylinositol 4,5-bisphosphate. The interval 106 to 128 (EEQNKSKKKAQQAAADTGNSSQV) is disordered. A Phosphotyrosine; by host modification is found at Tyr132. The tract at residues 189 to 227 (NTVGGHQAAMQMLKETINEEAAEWDRLHPVHAGPIAPGQ) is interaction with human PPIA/CYPA and NUP153. The segment at 277–363 (YSPTSILDIR…GGPGHKARVL (87 aa)) is dimerization/Multimerization of capsid protein p24. 2 consecutive CCHC-type zinc fingers follow at residues 390–407 (VKCF…NCRA) and 411–428 (KGCW…DCTE). The interval 489 to 493 (PQITL) is dimerization of protease. The region spanning 508 to 577 (KEALLDTGAD…TPVNIIGRNL (70 aa)) is the Peptidase A2 domain. The active-site For protease activity; shared with dimeric partner is Asp513. Dimerization of protease regions lie at residues 537 to 543 (GIGGFIK) and 576 to 588 (NLLT…LNFP). Positions 631-821 (EGKISKIGPE…PPFLWMGYEL (191 aa)) constitute a Reverse transcriptase domain. Residues Asp697, Asp772, and Asp773 each coordinate Mg(2+). The tract at residues 814–822 (FLWMGYELH) is RT 'primer grip'. The short motif at 985-1001 (WETWWTEYWQATWIPEW) is the Tryptophan repeat motif element. An RNase H type-1 domain is found at 1021-1144 (IIGAETFYVD…VDKLVSAGIR (124 aa)). Positions 1030, 1065, 1085, and 1136 each coordinate Mg(2+). The Integrase-type zinc finger occupies 1150–1191 (DGIDKAQEEHEKYHSNWRAMASDFNLPPVVAKEIVASCDKCQ). Positions 1159, 1163, 1187, and 1190 each coordinate Zn(2+). Residues 1201 to 1351 (VDCSPGIWQL…SAGERIVDII (151 aa)) enclose the Integrase catalytic domain. Positions 1211, 1263, and 1299 each coordinate Mg(2+). The integrase-type DNA-binding region spans 1370–1417 (FRVYYRDSRDPLWKGPAKLLWKGEGAVVIQDNSDIKVVPRRKAKIIRD).

As to quaternary structure, homotrimer; further assembles as hexamers of trimers. Interacts with gp41 (via C-terminus). Interacts with host CALM1; this interaction induces a conformational change in the Matrix protein, triggering exposure of the myristate group. Interacts with host AP3D1; this interaction allows the polyprotein trafficking to multivesicular bodies during virus assembly. Part of the pre-integration complex (PIC) which is composed of viral genome, matrix protein, Vpr and integrase. In terms of assembly, homodimer; the homodimer further multimerizes as homohexamers or homopentamers. Interacts with human PPIA/CYPA; This interaction stabilizes the capsid. Interacts with human NUP153. Interacts with host PDZD8; this interaction stabilizes the capsid. Interacts with monkey TRIM5; this interaction destabilizes the capsid. Homodimer, whose active site consists of two apposed aspartic acid residues. As to quaternary structure, heterodimer of p66 RT and p51 RT (RT p66/p51). Heterodimerization of RT is essential for DNA polymerase activity. The overall folding of the subdomains is similar in p66 RT and p51 RT but the spatial arrangements of the subdomains are dramatically different. In terms of assembly, homotetramer; may further associate as a homohexadecamer. Part of the pre-integration complex (PIC) which is composed of viral genome, matrix protein, Vpr and integrase. Interacts with human SMARCB1/INI1 and human PSIP1/LEDGF isoform 1. Interacts with human KPNA3; this interaction might play a role in nuclear import of the pre-integration complex. Interacts with human NUP153; this interaction might play a role in nuclear import of the pre-integration complex. The cofactor is Mg(2+). Specific enzymatic cleavages by the viral protease yield mature proteins. The protease is released by autocatalytic cleavage. The polyprotein is cleaved during and after budding, this process is termed maturation. Proteolytic cleavage of p66 RT removes the RNase H domain to yield the p51 RT subunit. Nucleocapsid protein p7 might be further cleaved after virus entry. Post-translationally, tyrosine phosphorylated presumably in the virion by a host kinase. Phosphorylation is apparently not a major regulator of membrane association. In terms of processing, phosphorylated possibly by host MAPK1; this phosphorylation is necessary for Pin1-mediated virion uncoating. Methylated by host PRMT6, impairing its function by reducing RNA annealing and the initiation of reverse transcription.

The protein localises to the host cell membrane. It localises to the host endosome. Its subcellular location is the host multivesicular body. It is found in the virion membrane. The protein resides in the host nucleus. The protein localises to the host cytoplasm. It localises to the virion. It catalyses the reaction Specific for a P1 residue that is hydrophobic, and P1' variable, but often Pro.. It carries out the reaction Endohydrolysis of RNA in RNA/DNA hybrids. Three different cleavage modes: 1. sequence-specific internal cleavage of RNA. Human immunodeficiency virus type 1 and Moloney murine leukemia virus enzymes prefer to cleave the RNA strand one nucleotide away from the RNA-DNA junction. 2. RNA 5'-end directed cleavage 13-19 nucleotides from the RNA end. 3. DNA 3'-end directed cleavage 15-20 nucleotides away from the primer terminus.. The catalysed reaction is 3'-end directed exonucleolytic cleavage of viral RNA-DNA hybrid.. The enzyme catalyses DNA(n) + a 2'-deoxyribonucleoside 5'-triphosphate = DNA(n+1) + diphosphate. Protease: The viral protease is inhibited by many synthetic protease inhibitors (PIs), such as amprenavir, atazanavir, indinavir, loprinavir, nelfinavir, ritonavir and saquinavir. Use of protease inhibitors in tritherapy regimens permit more ambitious therapeutic strategies. Reverse transcriptase/ribonuclease H: RT can be inhibited either by nucleoside RT inhibitors (NRTIs) or by non nucleoside RT inhibitors (NNRTIs). NRTIs act as chain terminators, whereas NNRTIs inhibit DNA polymerization by binding a small hydrophobic pocket near the RT active site and inducing an allosteric change in this region. Classical NRTIs are abacavir, adefovir (PMEA), didanosine (ddI), lamivudine (3TC), stavudine (d4T), tenofovir (PMPA), zalcitabine (ddC), and zidovudine (AZT). Classical NNRTIs are atevirdine (BHAP U-87201E), delavirdine, efavirenz (DMP-266), emivirine (I-EBU), and nevirapine (BI-RG-587). The tritherapies used as a basic effective treatment of AIDS associate two NRTIs and one NNRTI. In terms of biological role, mediates, with Gag polyprotein, the essential events in virion assembly, including binding the plasma membrane, making the protein-protein interactions necessary to create spherical particles, recruiting the viral Env proteins, and packaging the genomic RNA via direct interactions with the RNA packaging sequence (Psi). Gag-Pol polyprotein may regulate its own translation, by the binding genomic RNA in the 5'-UTR. At low concentration, the polyprotein would promote translation, whereas at high concentration, the polyprotein would encapsidate genomic RNA and then shut off translation. Its function is as follows. Targets the polyprotein to the plasma membrane via a multipartite membrane-binding signal, that includes its myristoylated N-terminus. Matrix protein is part of the pre-integration complex. Implicated in the release from host cell mediated by Vpu. Binds to RNA. Forms the conical core that encapsulates the genomic RNA-nucleocapsid complex in the virion. Most core are conical, with only 7% tubular. The core is constituted by capsid protein hexamer subunits. The core is disassembled soon after virion entry. Host restriction factors such as TRIM5-alpha or TRIMCyp bind retroviral capsids and cause premature capsid disassembly, leading to blocks in reverse transcription. Capsid restriction by TRIM5 is one of the factors which restricts HIV-1 to the human species. Host PIN1 apparently facilitates the virion uncoating. On the other hand, interactions with PDZD8 or CYPA stabilize the capsid. Functionally, encapsulates and protects viral dimeric unspliced genomic RNA (gRNA). Binds these RNAs through its zinc fingers. Acts as a nucleic acid chaperone which is involved in rearangement of nucleic acid secondary structure during gRNA retrotranscription. Also facilitates template switch leading to recombination. As part of the polyprotein, participates in gRNA dimerization, packaging, tRNA incorporation and virion assembly. In terms of biological role, aspartyl protease that mediates proteolytic cleavages of Gag and Gag-Pol polyproteins during or shortly after the release of the virion from the plasma membrane. Cleavages take place as an ordered, step-wise cascade to yield mature proteins. This process is called maturation. Displays maximal activity during the budding process just prior to particle release from the cell. Also cleaves Nef and Vif, probably concomitantly with viral structural proteins on maturation of virus particles. Hydrolyzes host EIF4GI and PABP1 in order to shut off the capped cellular mRNA translation. The resulting inhibition of cellular protein synthesis serves to ensure maximal viral gene expression and to evade host immune response. Also mediates cleavage of host YTHDF3. Mediates cleavage of host CARD8, thereby activating the CARD8 inflammasome, leading to the clearance of latent HIV-1 in patient CD4(+) T-cells after viral reactivation; in contrast, HIV-1 can evade CARD8-sensing when its protease remains inactive in infected cells prior to viral budding. Its function is as follows. Multifunctional enzyme that converts the viral RNA genome into dsDNA in the cytoplasm, shortly after virus entry into the cell. This enzyme displays a DNA polymerase activity that can copy either DNA or RNA templates, and a ribonuclease H (RNase H) activity that cleaves the RNA strand of RNA-DNA heteroduplexes in a partially processive 3' to 5' endonucleasic mode. Conversion of viral genomic RNA into dsDNA requires many steps. A tRNA(3)-Lys binds to the primer-binding site (PBS) situated at the 5'-end of the viral RNA. RT uses the 3' end of the tRNA primer to perform a short round of RNA-dependent minus-strand DNA synthesis. The reading proceeds through the U5 region and ends after the repeated (R) region which is present at both ends of viral RNA. The portion of the RNA-DNA heteroduplex is digested by the RNase H, resulting in a ssDNA product attached to the tRNA primer. This ssDNA/tRNA hybridizes with the identical R region situated at the 3' end of viral RNA. This template exchange, known as minus-strand DNA strong stop transfer, can be either intra- or intermolecular. RT uses the 3' end of this newly synthesized short ssDNA to perform the RNA-dependent minus-strand DNA synthesis of the whole template. RNase H digests the RNA template except for two polypurine tracts (PPTs) situated at the 5'-end and near the center of the genome. It is not clear if both polymerase and RNase H activities are simultaneous. RNase H probably can proceed both in a polymerase-dependent (RNA cut into small fragments by the same RT performing DNA synthesis) and a polymerase-independent mode (cleavage of remaining RNA fragments by free RTs). Secondly, RT performs DNA-directed plus-strand DNA synthesis using the PPTs that have not been removed by RNase H as primers. PPTs and tRNA primers are then removed by RNase H. The 3' and 5' ssDNA PBS regions hybridize to form a circular dsDNA intermediate. Strand displacement synthesis by RT to the PBS and PPT ends produces a blunt ended, linear dsDNA copy of the viral genome that includes long terminal repeats (LTRs) at both ends. Catalyzes viral DNA integration into the host chromosome, by performing a series of DNA cutting and joining reactions. This enzyme activity takes place after virion entry into a cell and reverse transcription of the RNA genome in dsDNA. The first step in the integration process is 3' processing. This step requires a complex comprising the viral genome, matrix protein, Vpr and integrase. This complex is called the pre-integration complex (PIC). The integrase protein removes 2 nucleotides from each 3' end of the viral DNA, leaving recessed CA OH's at the 3' ends. In the second step, the PIC enters cell nucleus. This process is mediated through integrase and Vpr proteins, and allows the virus to infect a non dividing cell. This ability to enter the nucleus is specific of lentiviruses, other retroviruses cannot and rely on cell division to access cell chromosomes. In the third step, termed strand transfer, the integrase protein joins the previously processed 3' ends to the 5' ends of strands of target cellular DNA at the site of integration. The 5'-ends are produced by integrase-catalyzed staggered cuts, 5 bp apart. A Y-shaped, gapped, recombination intermediate results, with the 5'-ends of the viral DNA strands and the 3' ends of target DNA strands remaining unjoined, flanking a gap of 5 bp. The last step is viral DNA integration into host chromosome. This involves host DNA repair synthesis in which the 5 bp gaps between the unjoined strands are filled in and then ligated. Since this process occurs at both cuts flanking the HIV genome, a 5 bp duplication of host DNA is produced at the ends of HIV-1 integration. Alternatively, Integrase may catalyze the excision of viral DNA just after strand transfer, this is termed disintegration. This chain is Gag-Pol polyprotein (gag-pol), found in Homo sapiens (Human).